A 595-amino-acid polypeptide reads, in one-letter code: D-xylonate dehydratase (595 aa).

Residue Cys64 coordinates [2Fe-2S] cluster. Glu96 serves as a coordination point for Mg(2+). Residue Cys132 participates in [2Fe-2S] cluster binding. Residue Asp133 participates in Mg(2+) binding. Cys205 is a binding site for [2Fe-2S] cluster. Glu467 is a binding site for Mg(2+).

Belongs to the IlvD/Edd family. In terms of assembly, homotetramer. [2Fe-2S] cluster is required as a cofactor. Requires Mg(2+) as cofactor.

It carries out the reaction D-xylonate = 2-dehydro-3-deoxy-D-arabinonate + H2O. The enzyme catalyses D-gluconate = 2-dehydro-3-deoxy-D-gluconate + H2O. It participates in carbohydrate metabolism; D-xylose degradation. Functionally, catalyzes the dehydration of D-xylonate to 2-dehydro-3-deoxy-D-arabinonate during D-xylose degradation. Can also dehydrate D-gluconate, with similar catalytic efficiency. Has weak activity with D-galactonate, D-fuconate and L-arabinonate. This chain is D-xylonate dehydratase, found in Caulobacter vibrioides (strain ATCC 19089 / CIP 103742 / CB 15) (Caulobacter crescentus).